The following is a 485-amino-acid chain: Zinc finger protein 639 (485 aa).

Basic residues predominate over residues 1-14 (MNEYPKKRKRKTLH). A disordered region spans residues 1–20 (MNEYPKKRKRKTLHPSRYSD). Phosphoserine is present on serine 60. Residue lysine 76 forms a Glycyl lysine isopeptide (Lys-Gly) (interchain with G-Cter in SUMO2) linkage. Serine 88 carries the post-translational modification Phosphoserine. Glycyl lysine isopeptide (Lys-Gly) (interchain with G-Cter in SUMO2) cross-links involve residues lysine 177, lysine 181, and lysine 226. C2H2-type zinc fingers lie at residues 204-227 (YKCE…ILKH), 233-255 (NVCR…AKLH), 260-283 (YICK…ADTH), 289-311 (YWCE…FQEH), 374-397 (FVCQ…AIEH), 403-425 (HVCD…LNSH), 431-454 (YLCQ…DFKH), and 460-482 (HKCS…LPVH). The interaction with CTNNA2 stretch occupies residues 371–455 (KNFFVCQVCG…LKIHLDFKHS (85 aa)).

This sequence belongs to the krueppel C2H2-type zinc-finger protein family. As to quaternary structure, interacts with CTNNA2.

It is found in the nucleus. Functionally, binds DNA and may function as a transcriptional repressor. The chain is Zinc finger protein 639 (ZNF639) from Bos taurus (Bovine).